The following is a 139-amino-acid chain: ATP synthase epsilon chain (139 aa).

This sequence belongs to the ATPase epsilon chain family. As to quaternary structure, F-type ATPases have 2 components, CF(1) - the catalytic core - and CF(0) - the membrane proton channel. CF(1) has five subunits: alpha(3), beta(3), gamma(1), delta(1), epsilon(1). CF(0) has three main subunits: a, b and c.

It is found in the cell inner membrane. Produces ATP from ADP in the presence of a proton gradient across the membrane. The polypeptide is ATP synthase epsilon chain (Actinobacillus pleuropneumoniae serotype 7 (strain AP76)).